The following is a 296-amino-acid chain: Phosphatidylglycerol--prolipoprotein diacylglyceryl transferase (296 aa).

Transmembrane regions (helical) follow at residues 10 to 30 (IAFSLGPVQVHWYGLMYLAAF), 57 to 77 (LLFYGMLGVVLGGRIGYMLFY), 92 to 112 (VWEGGMSFHGGLLGVLIACWL), and 119 to 139 (LHFFDVMDFVAPLVPLGLGFG). Arg-140 contacts a 1,2-diacyl-sn-glycero-3-phospho-(1'-sn-glycerol). 3 consecutive transmembrane segments (helical) span residues 194–214 (QLYEAALEGVVMFVVLWTFSM), 220–240 (YAVSGLFALLYGVFRFIVEFV), and 254–274 (WLTMGQILSLPLVAVGLVLLA).

It belongs to the Lgt family.

The protein resides in the cell inner membrane. It carries out the reaction L-cysteinyl-[prolipoprotein] + a 1,2-diacyl-sn-glycero-3-phospho-(1'-sn-glycerol) = an S-1,2-diacyl-sn-glyceryl-L-cysteinyl-[prolipoprotein] + sn-glycerol 1-phosphate + H(+). It functions in the pathway protein modification; lipoprotein biosynthesis (diacylglyceryl transfer). Functionally, catalyzes the transfer of the diacylglyceryl group from phosphatidylglycerol to the sulfhydryl group of the N-terminal cysteine of a prolipoprotein, the first step in the formation of mature lipoproteins. This chain is Phosphatidylglycerol--prolipoprotein diacylglyceryl transferase, found in Xanthomonas axonopodis pv. citri (strain 306).